A 121-amino-acid polypeptide reads, in one-letter code: Large ribosomal subunit protein uL14c (121 aa).

The protein belongs to the universal ribosomal protein uL14 family. As to quaternary structure, part of the 50S ribosomal subunit.

The protein localises to the plastid. Its subcellular location is the chloroplast. Functionally, binds to 23S rRNA. This Pelargonium hortorum (Common geranium) protein is Large ribosomal subunit protein uL14c.